A 180-amino-acid chain; its full sequence is Endoribonuclease YbeY (180 aa).

Residues His118, His122, and His128 each contribute to the Zn(2+) site.

It belongs to the endoribonuclease YbeY family. It depends on Zn(2+) as a cofactor.

The protein localises to the cytoplasm. Its function is as follows. Single strand-specific metallo-endoribonuclease involved in late-stage 70S ribosome quality control and in maturation of the 3' terminus of the 16S rRNA. The sequence is that of Endoribonuclease YbeY from Rhodococcus opacus (strain B4).